We begin with the raw amino-acid sequence, 398 residues long: Secreted aspartic protease 3 (398 aa).

The N-terminal stretch at 1–18 (MFLKNIFIALAIALLADA) is a signal peptide. The propeptide at 19 to 58 (TPTTFNNSPGFVALNFDVIKTHKNVTGPQGEINTNVNVKR) is activation peptide. N-linked (GlcNAc...) asparagine glycosylation is present at Asn-42. Residues 72-384 (YASDITVGSN…DLDDNEISLA (313 aa)) enclose the Peptidase A1 domain. Asp-90 is a catalytic residue. Position 90-92 (90-92 (DTG)) interacts with pepstatin A. Residues 103–112 (VSCQAGQGQD) show a composition bias toward polar residues. The segment at 103 to 139 (VSCQAGQGQDPNFCKNEGTYSPSSSSSSQNLNSPFSI) is disordered. The cysteines at positions 105 and 116 are disulfide-linked. The segment covering 123-138 (SPSSSSSSQNLNSPFS) has biased composition (low complexity). Pepstatin A is bound at residue 140–143 (EYGD). His-188, Asp-248, His-254, and Asp-270 together coordinate Zn(2+). Residue Asp-274 is part of the active site. 274–278 (DSGTT) is a binding site for pepstatin A. The cysteines at positions 312 and 350 are disulfide-linked. Asn-313 carries an N-linked (GlcNAc...) asparagine glycan.

This sequence belongs to the peptidase A1 family. Monomer.

The protein localises to the secreted. The enzyme catalyses Preferential cleavage at the carboxyl of hydrophobic amino acids, but fails to cleave 15-Leu-|-Tyr-16, 16-Tyr-|-Leu-17 and 24-Phe-|-Phe-25 of insulin B chain. Activates trypsinogen, and degrades keratin.. With respect to regulation, inhibited by pepstatin A analogs. In terms of biological role, secreted aspartic peptidases (SAPs) are a group of ten acidic hydrolases considered as key virulence factors. These enzymes supply the fungus with nutrient amino acids as well as are able to degrade the selected host's proteins involved in the immune defense. Induces host inflammatory cytokine production in a proteolytic activity-independent way. Moreover, acts toward human hemoglobin though limited proteolysis to generate a variety of antimicrobial hemocidins, enabling to compete with the other microorganisms of the same physiological niche using the microbicidal peptides generated from the host protein. Its function is as follows. Plays a key role in defense against host by cleaving histatin-5 (Hst 5), a peptide from human saliva that carries out fungicidal activity. The cleavage rate decreases in an order of SAP2 &gt; SAP9 &gt; SAP3 &gt; SAP7 &gt; SAP4 &gt; SAP1 &gt; SAP8. The first cleavage occurs between residues 'Lys-17' and 'His-18' of Hst 5, giving DSHAKRHHGYKRKFHEK and HHSHRGY peptides. Simultaneously, the DSHAKRHHGYKRK peptide is also formed. Further fragmentation by SAP3 results in DSHAKRHHGY and KRKFHEK products. The protein is Secreted aspartic protease 3 of Candida albicans (strain SC5314 / ATCC MYA-2876) (Yeast).